Consider the following 482-residue polypeptide: GPI mannosyltransferase 3 (482 aa).

A helical membrane pass occupies residues 12-32 (LFAFIFIFRLANSFAIETFFQ). A glycan (N-linked (GlcNAc...) asparagine) is linked at N80. The next 4 membrane-spanning stretches (helical) occupy residues 114–134 (KLAW…YVIT), 137–155 (FSNN…FWPW), 175–195 (IIRP…LISI), and 199–219 (LKWV…NTAL). N-linked (GlcNAc...) asparagine glycosylation is present at N242. Transmembrane regions (helical) follow at residues 252 to 272 (WHFY…PLMI), 274 to 294 (GLKK…FSLI), and 324 to 344 (FVLI…NVHE).

It belongs to the glycosyltransferase 22 family. PIGB subfamily.

It localises to the endoplasmic reticulum membrane. It participates in glycolipid biosynthesis; glycosylphosphatidylinositol-anchor biosynthesis. Functionally, mannosyltransferase involved in glycosylphosphatidylinositol-anchor biosynthesis. Transfers the third mannose to Man2-GlcN-acyl-PI during GPI precursor assembly. This Candida albicans (strain SC5314 / ATCC MYA-2876) (Yeast) protein is GPI mannosyltransferase 3 (GPI10).